A 519-amino-acid polypeptide reads, in one-letter code: Cell adhesion molecule CEACAM1 (519 aa).

The signal sequence occupies residues 1–34; that stretch reads MELASARLLRGQIPWRGLLLTASLLTYWSPLTTA. Gln35 carries the pyrrolidone carboxylic acid modification. Residues 35-425 are Extracellular-facing; that stretch reads QVTVDAVPPN…QGNSGLSEGA (391 aa). Residues 39–142 form a required for homophilic binding region; it reads DAVPPNVVEE…QTSVQFRVYP (104 aa). The region spanning 42-140 is the Ig-like V-type domain; that stretch reads PPNVVEEKSV…PIQTSVQFRV (99 aa). Asn87, Asn104, Asn113, Asn148, Asn152, Asn173, Asn197, Asn224, Asn256, Asn288, Asn292, Asn302, Asn315, and Asn331 each carry an N-linked (GlcNAc...) asparagine glycan. 3 consecutive Ig-like C2-type domains span residues 147–232, 237–317, and 325–403; these read PNVT…FNLD, PDAP…KNIT, and PSIQ…FRIS. A disulfide bridge links Cys167 with Cys215. A disulfide bridge connects residues Cys259 and Cys299. An intrachain disulfide couples Cys344 to Cys392. An N-linked (GlcNAc...) asparagine; atypical glycan is attached at Asn374. Residues 426-446 traverse the membrane as a helical segment; that stretch reads IAGIVIGSVAGVALIAALAYF. Residues 445-457 are interaction with calmodulin; it reads YFLYSRKTGGGSD. Residues 447-519 are Cytoplasmic-facing; that stretch reads LYSRKTGGGS…ETVYSVVKKK (73 aa). Residues 447-519 form an interaction with FLNA region; that stretch reads LYSRKTGGGS…ETVYSVVKKK (73 aa). The interval 455 to 519 is disordered; that stretch reads GSDHRDLTEH…ETVYSVVKKK (65 aa). A compositionally biased stretch (basic and acidic residues) spans 456–466; that stretch reads SDHRDLTEHKP. The segment at 484–519 is required for interaction with PTPN11 and PTPN6 and for control of phosphorylation level; the sequence is DDVSYSVLNFNAQQSKRPTSASSSPTETVYSVVKKK. A Phosphotyrosine; by SRC, LCK, INSR and EGFR modification is found at Tyr488. Over residues 489–512 the composition is skewed to polar residues; it reads SVLNFNAQQSKRPTSASSSPTETV. Ser503 is modified (phosphoserine). The residue at position 513 (Tyr513) is a Phosphotyrosine; by INSR, SRC and LCK. An essential for interaction with PTPN11 and PTPN6 region spans residues 513-516; the sequence is YSVV.

It belongs to the immunoglobulin superfamily. CEA family. As to quaternary structure, monomer. Oligomer. Heterodimer. Homodimer. Cis-dimer/oligomer (via Ig-like C2-type and/or via cytoplasmic domains); induced by trans-homophilic cell adhesion through an allosteric mechanism transmitted by the Ig-like V-type domain, and is regulated by intracellular calcium and calmodulin. Interacts (via cytoplasmic domain) with calmodulin in a calcium dependent manner; reduces homophilic cell adhesion through dissociation of dimer. Isoform 1 interacts (via cytoplasmic domain) with PTPN11 (preferentially) and PTPN6; cis-homodimer form is preferred; this interaction is decreased by formation of isoform 1 / isoform 2 cis-heterodimers and is dependent on the monomer/dimer equilibrium; this interaction is phosphorylation-dependent. Isoform 1 interacts with LYN. Isoform 1 interacts (via cytoplasmic domain) with SRC (via SH2 domain); this interaction is regulated by trans-homophilic cell adhesion. Isoform 1 interacts (via cytoplasmic domain) with LCK; mediates phosphorylation at Tyr-488 and Tyr-513 resulting in PTPN6 association. Isoform 1 interacts with PTPN6; this interaction is phosphorylation-dependent and causes a profound decrease in TCR stimulation-induced CD247 and ZAP70 phosphorylation. Isoform 1 interacts with TCR/CD3 complex through TCR beta chain and CD3E; colocalizes at the cell surface and upon stimulation of the TCR/CD3 complex recruits PTPN6 in the TCR/CD3 complex, resulting in dephosphorylation of CD247 and ZAP70. Isoform 1 interacts (via cytoplasmic domain) with SHC1 (via SH2 domain); SHC1 mediates interaction with INSR or EGFR in a Ser-503 phosphorylation-dependent manner. Isoform 1 interacts with EGFR; the interaction is indirect. Isoform 1 interacts with CSF3R; down-regulates the CSF3R-STAT3 pathway through recruitment of PTPN6 that dephosphorylates CSF3R. Isoform 1 (phosphorylated form) interacts with TLR4 and SYK; recruits PTPN6 that dephosphorylates SYK, reducing the production of reactive oxygen species (ROS) and lysosome disruption, leading to a reduction of the inflammasome activity. Isoform 1 interacts with FLNA; inhibits cell migration and cell scattering by interfering with the interaction of FLNA with RALA. Isoform 1 interacts (via cytoplasmic domain) with PXN; the interaction is phosphotyrosyl-dependent. Isoform 1 interacts with KLRK1; recruits PTPN6 that dephosphorylates VAV1. Isoform 1 interacts with CEACAM8. Isoform 1 interacts with FASN; this interaction is insulin and phosphorylation-dependent; reduces fatty-acid synthase activity. Interacts (via Ig-like V-type) with HAVCR2 (via Ig-like V-type); facilitates the maturation and cell surface expression of HAVCR2 thereby regulating T-cell tolerance induction. Isoform 2 interacts (via the cytoplasmic domain) with ANXA2; this interaction is regulated by phosphorylation and appears in the AIIt complex. Interacts (via Lewis X moieties) with CD209 (via C-type lectin domain); this interaction is regulated by the glycosylation pattern of CEACAM1 on cell types and regulates contact between dendritic cells and neutrophils. Phosphorylated on serine and tyrosine. Isoform 1 is phosphorylated on tyrosine by Src family kinases like SRC and LCK and by receptor like CSF3R, EGFR and INSR upon stimulation. Phosphorylated at Ser-503; mediates activity. Phosphorylated at Tyr-488; regulates activity. Phosphorylated at Tyr-488 by EGFR and INSR upon stimulation; this phosphorylation is Ser-503-phosphorylation-dependent; mediates cellular internalization; increases interaction with FASN. Phosphorylated at Tyr-488 and Tyr-513 by LCK; mediates PTPN6 association and is regulated by homophilic ligation of CEACAM1 in the absence of T-cell activation. Phosphorylated at Tyr-513; mediates interaction with PTPN11. In terms of processing, phosphorylated on serine and threonine. In terms of tissue distribution, expressed in epithelia, vessel endothelia, leukocytes and platelets. Isoform 1 and isoform 2 are highly expressed in liver and intestine, moderately in lung, and weakly in muscle, kidney, and spleen. Expressed in granulocytes, lymphocytes, granulocytes, B cells, and T-cells.

The protein resides in the cell membrane. It is found in the lateral cell membrane. Its subcellular location is the apical cell membrane. The protein localises to the basal cell membrane. It localises to the cell junction. The protein resides in the adherens junction. It is found in the cytoplasmic vesicle. Its subcellular location is the secretory vesicle. The protein localises to the cell projection. It localises to the microvillus membrane. Its function is as follows. Cell adhesion protein that mediates homophilic cell adhesion in a calcium-independent manner. Plays a role as coinhibitory receptor in immune response, insulin action and also functions as an activator during angiogenesis. Its coinhibitory receptor function is phosphorylation- and PTPN6 -dependent, which in turn, suppress signal transduction of associated receptors by dephosphorylation of their downstream effectors. Plays a role in immune response, of T-cells, natural killer (NK) and neutrophils. Upon TCR/CD3 complex stimulation, inhibits TCR-mediated cytotoxicity by blocking granule exocytosis by mediating homophilic binding to adjacent cells, allowing interaction with and phosphorylation by LCK and interaction with the TCR/CD3 complex which recruits PTPN6 resulting in dephosphorylation of CD247 and ZAP70. Also inhibits T-cell proliferation and cytokine production through inhibition of JNK cascade and plays a crucial role in regulating autoimmunity and anti-tumor immunity by inhibiting T-cell through its interaction with HAVCR2. Upon natural killer (NK) cells activation, inhibit KLRK1-mediated cytolysis of CEACAM1-bearing tumor cells by trans-homophilic interactions with CEACAM1 on the target cell and lead to cis-interaction between CEACAM1 and KLRK1, allowing PTPN6 recruitment and then VAV1 dephosphorylation. Upon neutrophils activation negatively regulates IL1B production by recruiting PTPN6 to a SYK-TLR4-CEACAM1 complex, that dephosphorylates SYK, reducing the production of reactive oxygen species (ROS) and lysosome disruption, which in turn, reduces the activity of the inflammasome. Down-regulates neutrophil production by acting as a coinhibitory receptor for CSF3R by downregulating the CSF3R-STAT3 pathway through recruitment of PTPN6 that dephosphorylates CSF3R. Also regulates insulin action by promoting INS clearance and regulating lipogenesis in liver through regulating insulin signaling. Upon INS stimulation, undergoes phosphorylation by INSR leading to INS clearance by increasing receptor-mediated insulin endocytosis. This inernalization promotes interaction with FASN leading to receptor-mediated insulin degradation and to reduction of FASN activity leading to negative regulation of fatty acid synthesis. INSR-mediated phosphorylation also provokes a down-regulation of cell proliferation through SHC1 interaction resulting in decrease coupling of SHC1 to the MAPK3/ERK1-MAPK1/ERK2 and phosphatidylinositol 3-kinase pathways. Functions as activator in angiogenesis by promoting blood vessel remodeling through endothelial cell differentiation and migration and in arteriogenesis by increasing the number of collateral arteries and collateral vessel calibers after ischemia. Also regulates vascular permeability through the VEGFR2 signaling pathway resulting in control of nitric oxide production. Down-regulates cell growth in response to EGF through its interaction with SHC1 that mediates interaction with EGFR resulting in decrease coupling of SHC1 to the MAPK3/ERK1-MAPK1/ERK2 pathway. Negatively regulates platelet aggregation by decreasing platelet adhesion on type I collagen through the GPVI-FcRgamma complex. Inhibits cell migration and cell scattering through interaction with FLNA; interferes with the interaction of FLNA with RALA. Mediates bile acid transport activity in a phosphorylation dependent manner. Negatively regulates osteoclastogenesis. In terms of biological role, cell adhesion proteins that mediates homophilic cell adhesion in a calcium-independent manner. Promotes populations of T-cells regulating IgA production and secretion associated with control of the commensal microbiota and resistance to enteropathogens. This chain is Cell adhesion molecule CEACAM1, found in Rattus norvegicus (Rat).